The sequence spans 480 residues: Probable glycosyltransferase At5g25310 (480 aa).

The Cytoplasmic segment spans residues 1–10 (MDKFQSKFTR). Residues 11–31 (FGFISICFGSIALVLLISHCS) traverse the membrane as a helical; Signal-anchor for type II membrane protein segment. The Lumenal portion of the chain corresponds to 32 to 480 (TSFFDYSFQK…WLRRLNLKLT (449 aa)). N-linked (GlcNAc...) asparagine glycosylation is found at Asn85, Asn120, Asn243, Asn271, and Asn281.

Belongs to the glycosyltransferase 47 family.

Its subcellular location is the golgi apparatus membrane. Functionally, may be involved in cell wall biosynthesis. This chain is Probable glycosyltransferase At5g25310, found in Arabidopsis thaliana (Mouse-ear cress).